The sequence spans 211 residues: MSEAETLKGTTTIGIVFKDGIILATEKRATMGSMIASKRAKKVYQVADRIGMTTAGGVGDAQQLARIMSVECNLYQIRRGRSISVGASSTLLSNYLNQNRGYPYYVQLLVGGVDATGPSVYSVDAMGGATRESDIVATGSGSPMAYGVLEDRYKKDLTEDEAIELAIRALRAAMRRDSASGEGIHVVIITKDAYSELSEERLEQYTAAVTA.

Positions 1–9 (MSEAETLKG) are cleaved as a propeptide — removed in mature form; by autocatalysis. Thr-10 (nucleophile) is an active-site residue.

This sequence belongs to the peptidase T1B family. The 20S proteasome core is composed of 14 alpha and 14 beta subunits that assemble into four stacked heptameric rings, resulting in a barrel-shaped structure. The two inner rings, each composed of seven catalytic beta subunits, are sandwiched by two outer rings, each composed of seven alpha subunits. The catalytic chamber with the active sites is on the inside of the barrel. Has a gated structure, the ends of the cylinder being occluded by the N-termini of the alpha-subunits. Is capped at one or both ends by the proteasome regulatory ATPase, PAN.

It is found in the cytoplasm. It catalyses the reaction Cleavage of peptide bonds with very broad specificity.. With respect to regulation, the formation of the proteasomal ATPase PAN-20S proteasome complex, via the docking of the C-termini of PAN into the intersubunit pockets in the alpha-rings, triggers opening of the gate for substrate entry. Interconversion between the open-gate and close-gate conformations leads to a dynamic regulation of the 20S proteasome proteolysis activity. Its function is as follows. Component of the proteasome core, a large protease complex with broad specificity involved in protein degradation. The protein is Proteasome subunit beta of Methanosphaerula palustris (strain ATCC BAA-1556 / DSM 19958 / E1-9c).